The sequence spans 72 residues: Cytochrome b-c1 complex subunit 8-1, mitochondrial (72 aa).

Residues 1-41 (MGKQPVKLKAVVYALSPFQQKIMTGLWKDLPEKIHHKVSEN) lie on the Mitochondrial matrix side of the membrane. Residues 42-58 (WISATLLVTPVVGTYWY) traverse the membrane as a helical segment. Topologically, residues 59–72 (AQYFKEQEKLEHRF) are mitochondrial intermembrane.

The protein belongs to the UQCRQ/QCR8 family. As to quaternary structure, component of the ubiquinol-cytochrome c oxidoreductase (cytochrome b-c1 complex, complex III, CIII), a multisubunit enzyme composed of 10 subunits. The complex is composed of 3 respiratory subunits cytochrome b (MT-CYB), cytochrome c1 (CYC1-1 or CYC1-2) and Rieske protein (UCR1-1 or UCR1-2), 2 core protein subunits MPPalpha1 (or MPPalpha2) and MPPB, and 5 low-molecular weight protein subunits QCR7-1 (or QCR7-2), UCRQ-1 (or UCRQ-2), QCR9, UCRY and probably QCR6-1 (or QCR6-2). The complex exists as an obligatory dimer and forms supercomplexes (SCs) in the inner mitochondrial membrane with NADH-ubiquinone oxidoreductase (complex I, CI), resulting in different assemblies (supercomplexes SCI(1)III(2) and SCI(2)III(4)).

The protein resides in the mitochondrion inner membrane. Component of the ubiquinol-cytochrome c oxidoreductase, a multisubunit transmembrane complex that is part of the mitochondrial electron transport chain which drives oxidative phosphorylation. The respiratory chain contains 3 multisubunit complexes succinate dehydrogenase (complex II, CII), ubiquinol-cytochrome c oxidoreductase (cytochrome b-c1 complex, complex III, CIII) and cytochrome c oxidase (complex IV, CIV), that cooperate to transfer electrons derived from NADH and succinate to molecular oxygen, creating an electrochemical gradient over the inner membrane that drives transmembrane transport and the ATP synthase. The cytochrome b-c1 complex catalyzes electron transfer from ubiquinol to cytochrome c, linking this redox reaction to translocation of protons across the mitochondrial inner membrane, with protons being carried across the membrane as hydrogens on the quinol. In the process called Q cycle, 2 protons are consumed from the matrix, 4 protons are released into the intermembrane space and 2 electrons are passed to cytochrome c. The chain is Cytochrome b-c1 complex subunit 8-1, mitochondrial (UCRQ-1) from Arabidopsis thaliana (Mouse-ear cress).